The chain runs to 472 residues: Aspartyl/glutamyl-tRNA(Asn/Gln) amidotransferase subunit B (472 aa).

Belongs to the GatB/GatE family. GatB subfamily. As to quaternary structure, heterotrimer of A, B and C subunits.

The catalysed reaction is L-glutamyl-tRNA(Gln) + L-glutamine + ATP + H2O = L-glutaminyl-tRNA(Gln) + L-glutamate + ADP + phosphate + H(+). It carries out the reaction L-aspartyl-tRNA(Asn) + L-glutamine + ATP + H2O = L-asparaginyl-tRNA(Asn) + L-glutamate + ADP + phosphate + 2 H(+). Functionally, allows the formation of correctly charged Asn-tRNA(Asn) or Gln-tRNA(Gln) through the transamidation of misacylated Asp-tRNA(Asn) or Glu-tRNA(Gln) in organisms which lack either or both of asparaginyl-tRNA or glutaminyl-tRNA synthetases. The reaction takes place in the presence of glutamine and ATP through an activated phospho-Asp-tRNA(Asn) or phospho-Glu-tRNA(Gln). The sequence is that of Aspartyl/glutamyl-tRNA(Asn/Gln) amidotransferase subunit B from Campylobacter jejuni subsp. jejuni serotype O:23/36 (strain 81-176).